Reading from the N-terminus, the 557-residue chain is MVTEWIQLLIFLFALLIFSPLFGLGLYKVYLYKTSGFEKFLYKICGIDPNRNMDWKEYALSLLVFNFFGFLLLFLILFFQNYLPLNPENFPGLVWDLAFNTAVSFATNTNWQAYSGESTLSFFSQMAGLTTQNFLSATTGLCVLLALSRGISVNYNVFALGNFWKDMIRGTLYVLLPLSFIFALFLVGFGVVQTFSESVSAITLEGNTQIIPLGPVASQVAIKQLGTNGGGYFGVNASHPFENPSPISNFLQMFSILILPGACVFLYGRITGSIRHAWAIFSVMFTILCVGILIVWTFESSWNPISGTLGFWEGKEIRFGILNSSIWEVATTVASNGSVNSMHDSFSPIGGLVGILNIQLREIVFGGVGAGMYGMILFVLLTVFLSGIMVGRSPEYLGKKIEKREIQMSILGILLPSTIILLFTAISVSVSDALSSLTNRGPHGLSEILYAFSSGAGNNGSAFAGLNANTTYYNVMIAIAMILGRFGVILPVLVIAGSLAQKKRSEIVSEGSFSTEGGTFYILLLSVIIIVGALTFFPVLTIGPILEHFIMFQNLTF.

10 helical membrane passes run 6-26 (IQLL…GLGL), 59-79 (ALSL…ILFF), 127-147 (AGLT…LLAL), 172-192 (LYVL…FGVV), 247-267 (ISNF…VFLY), 278-298 (WAIF…VWTF), 363-383 (IVFG…LLTV), 410-430 (ILGI…SVSV), 475-495 (VMIA…VLVI), and 520-540 (FYIL…FPVL).

It belongs to the KdpA family. As to quaternary structure, the system is composed of three essential subunits: KdpA, KdpB and KdpC.

It localises to the cell inner membrane. In terms of biological role, part of the high-affinity ATP-driven potassium transport (or Kdp) system, which catalyzes the hydrolysis of ATP coupled with the electrogenic transport of potassium into the cytoplasm. This subunit binds the periplasmic potassium ions and delivers the ions to the membrane domain of KdpB through an intramembrane tunnel. In Leptospira interrogans serogroup Icterohaemorrhagiae serovar Lai (strain 56601), this protein is Potassium-transporting ATPase potassium-binding subunit.